Consider the following 302-residue polypeptide: Oxygen-dependent coproporphyrinogen-III oxidase (302 aa).

Ser-94 lines the substrate pocket. A divalent metal cation-binding residues include His-98 and His-108. Residue His-108 is the Proton donor of the active site. 110 to 112 contributes to the substrate binding site; the sequence is NVR. Residues His-147 and His-177 each coordinate a divalent metal cation. The segment at 242–277 is important for dimerization; that stretch reads YVEFNLVFDRGTLFGLQSGGRAESILMSMPPVANWR. A substrate-binding site is contributed by 260–262; sequence GGR.

It belongs to the aerobic coproporphyrinogen-III oxidase family. In terms of assembly, homodimer. A divalent metal cation is required as a cofactor.

It is found in the cytoplasm. It carries out the reaction coproporphyrinogen III + O2 + 2 H(+) = protoporphyrinogen IX + 2 CO2 + 2 H2O. It participates in porphyrin-containing compound metabolism; protoporphyrin-IX biosynthesis; protoporphyrinogen-IX from coproporphyrinogen-III (O2 route): step 1/1. Functionally, involved in the heme biosynthesis. Catalyzes the aerobic oxidative decarboxylation of propionate groups of rings A and B of coproporphyrinogen-III to yield the vinyl groups in protoporphyrinogen-IX. This is Oxygen-dependent coproporphyrinogen-III oxidase from Ralstonia pickettii (strain 12J).